The chain runs to 314 residues: Hydrolase 4 (314 aa).

Positions 73–75 (HGA) match the Involved in the stabilization of the negatively charged intermediate by the formation of the oxyanion hole motif. Residues Ser165 and Asp260 contribute to the active site.

This sequence belongs to the 'GDXG' lipolytic enzyme family.

It participates in alkaloid biosynthesis. Its function is as follows. Component of the seco-iridoid and derivatives monoterpenoid indole alkaloids (MIAs, e.g. vincadifformine) biosynthesis pathway. Catalyzes the conversion of O-acetylstemmadenine (OAS) to vincadifformine. May also trigger the formation of additional unknown MIAs. The chain is Hydrolase 4 from Catharanthus roseus (Madagascar periwinkle).